The following is a 246-amino-acid chain: Aspartate/glutamate leucyltransferase (246 aa).

The protein belongs to the R-transferase family. Bpt subfamily.

Its subcellular location is the cytoplasm. The catalysed reaction is N-terminal L-glutamyl-[protein] + L-leucyl-tRNA(Leu) = N-terminal L-leucyl-L-glutamyl-[protein] + tRNA(Leu) + H(+). It carries out the reaction N-terminal L-aspartyl-[protein] + L-leucyl-tRNA(Leu) = N-terminal L-leucyl-L-aspartyl-[protein] + tRNA(Leu) + H(+). Its function is as follows. Functions in the N-end rule pathway of protein degradation where it conjugates Leu from its aminoacyl-tRNA to the N-termini of proteins containing an N-terminal aspartate or glutamate. The sequence is that of Aspartate/glutamate leucyltransferase from Rhodospirillum rubrum (strain ATCC 11170 / ATH 1.1.1 / DSM 467 / LMG 4362 / NCIMB 8255 / S1).